Here is a 353-residue protein sequence, read N- to C-terminus: T-complex protein 1 subunit eta (353 aa).

It belongs to the TCP-1 chaperonin family. Heterooligomeric complex of about 850 to 900 kDa that forms two stacked rings, 12 to 16 nm in diameter.

Its subcellular location is the cytoplasm. Its function is as follows. Molecular chaperone; assists the folding of proteins upon ATP hydrolysis. Known to play a role, in vitro, in the folding of actin and tubulin. In Tetrahymena thermophila, this protein is T-complex protein 1 subunit eta.